The following is a 179-amino-acid chain: ATP synthase subunit delta, chloroplastic (179 aa).

This sequence belongs to the ATPase delta chain family. As to quaternary structure, F-type ATPases have 2 components, F(1) - the catalytic core - and F(0) - the membrane proton channel. F(1) has five subunits: alpha(3), beta(3), gamma(1), delta(1), epsilon(1). CF(0) has four main subunits: a(1), b(1), b'(1) and c(10-14). The alpha and beta chains form an alternating ring which encloses part of the gamma chain. F(1) is attached to F(0) by a central stalk formed by the gamma and epsilon chains, while a peripheral stalk is formed by the delta, b and b' chains.

It is found in the plastid. It localises to the chloroplast thylakoid membrane. F(1)F(0) ATP synthase produces ATP from ADP in the presence of a proton or sodium gradient. F-type ATPases consist of two structural domains, F(1) containing the extramembraneous catalytic core and F(0) containing the membrane proton channel, linked together by a central stalk and a peripheral stalk. During catalysis, ATP synthesis in the catalytic domain of F(1) is coupled via a rotary mechanism of the central stalk subunits to proton translocation. Its function is as follows. This protein is part of the stalk that links CF(0) to CF(1). It either transmits conformational changes from CF(0) to CF(1) or is implicated in proton conduction. This is ATP synthase subunit delta, chloroplastic from Ochrosphaera neapolitana.